The primary structure comprises 71 residues: Ceratotoxin-A (71 aa).

The N-terminal stretch at 1–23 is a signal peptide; the sequence is MANLKAVFLICIVAFIALQCVVA. Propeptides lie at residues 24-35 and 65-71; these read EPAAEDSVVVKR and VAAGLVG.

In terms of assembly, homomer of four to six subunits.

The protein localises to the secreted. Its function is as follows. Female-specific peptides with potent activity against Gram-positive and Gram-negative bacteria. They have as well hemolytic activity. In Ceratitis capitata (Mediterranean fruit fly), this protein is Ceratotoxin-A (CTXA1).